Here is a 282-residue protein sequence, read N- to C-terminus: MTEILDGAAVAKLTNEKTANRVAKLGKPVTLAVIYDPQNDGSRLYVGMKSKKAAALGIQTKDIPTAADATTESVLALVASLNADPSITGILVQSPLAKGVKEREIFSAVAPHKDADGLGATVQGMLFGDALDDYTVAATPQGVMTLLKHYNIDIFGKQALVIGRSQLFGRPMFALLTNADATVTLAHRYTPENVLKDYLKRADIVVVGVGKPDFIQGSDLKPGAVVIDVGMNFVNGKAVGDVNFDSVQSIASYITPVPGGVGPMTIATLLENTITLAENYQA.

An NADP(+)-binding site is contributed by 163–165 (GRS).

This sequence belongs to the tetrahydrofolate dehydrogenase/cyclohydrolase family. In terms of assembly, homodimer.

The catalysed reaction is (6R)-5,10-methylene-5,6,7,8-tetrahydrofolate + NADP(+) = (6R)-5,10-methenyltetrahydrofolate + NADPH. The enzyme catalyses (6R)-5,10-methenyltetrahydrofolate + H2O = (6R)-10-formyltetrahydrofolate + H(+). It participates in one-carbon metabolism; tetrahydrofolate interconversion. Catalyzes the oxidation of 5,10-methylenetetrahydrofolate to 5,10-methenyltetrahydrofolate and then the hydrolysis of 5,10-methenyltetrahydrofolate to 10-formyltetrahydrofolate. In Leuconostoc citreum (strain KM20), this protein is Bifunctional protein FolD.